We begin with the raw amino-acid sequence, 453 residues long: MFARVFKAMPARASALTSVNASIPARFMATVRQQRPAHERATFTIRDGPIFHGKSFGARTNISGEAVFTTSLVGYPESLTDPSYRGQILVFTQPLIGNYGVPSAERDEHGLLKYFESPNLQAAGVVVADVAEQYSHWTAVESLGEWCAREGVPAISGVDTRAIVTYLRERGSSLARITVGEEYDADQDEAFTDPEQIHLVRQVSTKAPFHVSAADPQCHVAVIDCGVKENILRSLVSRGAGITVFPFDYPIHKVAHHFDGVFISNGPGDPTHCQETTYHLRRLMETSQVPIFGICLGHQLLALAAGARTIKLKYGNRAHNIPALDLSTGRCHITSQNHGYAVDASTLPSDWKPYFVNLNDSSNEGMIHKSRPIFSTQFHPEAKGGPLDSSYLFDIYIDSVKKYKASQAAFYPQRDSLPSPLLVDLLAKERVGVQPTIGMQNIAAAATAAAAAA.

The transit peptide at 1-28 (MFARVFKAMPARASALTSVNASIPARFM) directs the protein to the mitochondrion. Residues 219-406 (HVAVIDCGVK…IDSVKKYKAS (188 aa)) form the Glutamine amidotransferase type-1 domain. The active-site Nucleophile is C295. Catalysis depends on residues H379 and E381.

The protein belongs to the CarA family. Heterodimer composed of 2 chains; the small (or glutamine) chain promotes the hydrolysis of glutamine to ammonia, which is used by the large (or ammonia) chain to synthesize carbamoyl phosphate.

Its subcellular location is the mitochondrion matrix. The enzyme catalyses hydrogencarbonate + L-glutamine + 2 ATP + H2O = carbamoyl phosphate + L-glutamate + 2 ADP + phosphate + 2 H(+). It catalyses the reaction L-glutamine + H2O = L-glutamate + NH4(+). It functions in the pathway amino-acid biosynthesis; L-arginine biosynthesis; carbamoyl phosphate from bicarbonate: step 1/1. In terms of biological role, small subunit of the arginine-specific carbamoyl phosphate synthase (CPSase). CPSase catalyzes the formation of carbamoyl phosphate from the ammonia moiety of glutamine, carbonate, and phosphate donated by ATP, the first step of the arginine biosynthetic pathway. The small subunit (glutamine amidotransferase) binds and cleaves glutamine to supply the large subunit with the substrate ammonia. The sequence is that of Carbamoyl phosphate synthase arginine-specific small chain (cpa1) from Aspergillus fumigatus (strain ATCC MYA-4609 / CBS 101355 / FGSC A1100 / Af293) (Neosartorya fumigata).